The following is a 479-amino-acid chain: Ribulose bisphosphate carboxylase large chain (479 aa).

Residues 1–2 constitute a propeptide that is removed on maturation; the sequence is MS. Asn-123 and Thr-173 together coordinate substrate. Lys-175 serves as the catalytic Proton acceptor. Lys-177 is a substrate binding site. Lys-201, Asp-203, and Glu-204 together coordinate Mg(2+). Position 201 is an N6-carboxylysine (Lys-201). Ser-208 is subject to Phosphoserine. His-294 acts as the Proton acceptor in catalysis. 2 residues coordinate substrate: Arg-295 and His-327. Thr-330 is subject to Phosphothreonine. Ser-379 is a binding site for substrate.

The protein belongs to the RuBisCO large chain family. Type I subfamily. Heterohexadecamer of 8 large chains and 8 small chains; disulfide-linked. The disulfide link is formed within the large subunit homodimers. Mg(2+) is required as a cofactor. In terms of processing, the disulfide bond which can form in the large chain dimeric partners within the hexadecamer appears to be associated with oxidative stress and protein turnover.

It localises to the plastid. Its subcellular location is the chloroplast. The enzyme catalyses 2 (2R)-3-phosphoglycerate + 2 H(+) = D-ribulose 1,5-bisphosphate + CO2 + H2O. It catalyses the reaction D-ribulose 1,5-bisphosphate + O2 = 2-phosphoglycolate + (2R)-3-phosphoglycerate + 2 H(+). Its function is as follows. RuBisCO catalyzes two reactions: the carboxylation of D-ribulose 1,5-bisphosphate, the primary event in carbon dioxide fixation, as well as the oxidative fragmentation of the pentose substrate in the photorespiration process. Both reactions occur simultaneously and in competition at the same active site. This Draba nemorosa (Woodland whitlowgrass) protein is Ribulose bisphosphate carboxylase large chain.